The sequence spans 431 residues: Urokinase-type plasminogen activator (431 aa).

The first 20 residues, 1–20 (MRALLARLLLCVLVVSDSKG), serve as a signal peptide directing secretion. Positions 27-63 (VPSNCDCLNGGTCVSNKYFSNIHWCNCPKKFGGQHCE) constitute an EGF-like domain. 6 disulfides stabilise this stretch: Cys31–Cys39, Cys33–Cys51, Cys53–Cys62, Cys70–Cys151, Cys91–Cys133, and Cys122–Cys146. A binds urokinase plasminogen activator surface receptor region spans residues 34 to 57 (LNGGTCVSNKYFSNIHWCNCPKKF). The O-linked (Fuc) threonine glycan is linked to Thr38. A Kringle domain is found at 70–151 (CYEGNGHFYR…LVQECMVHDC (82 aa)). Residues 152-177 (ADGKKPSSPPEELKFQCGQKTLRPRF) are connecting peptide. Ser158 is modified (phosphoserine). 6 cysteine pairs are disulfide-bonded: Cys168-Cys299, Cys209-Cys225, Cys217-Cys288, Cys313-Cys382, Cys345-Cys361, and Cys372-Cys400. The region spanning 179–424 (IIGGEFTTIE…FLPWIRSHTK (246 aa)) is the Peptidase S1 domain. Catalysis depends on charge relay system residues His224 and Asp275. Asn322 is a glycosylation site (N-linked (GlcNAc...) asparagine). Ser323 bears the Phosphoserine mark. The active-site Charge relay system is Ser376.

Belongs to the peptidase S1 family. In terms of assembly, found in high and low molecular mass forms. Each consists of two chains, A and B. The high molecular mass form contains a long chain A which is cleaved to yield a short chain A. Forms heterodimer with SERPINA5. Binds LRP1B; binding is followed by internalization and degradation. Interacts with MRC2. Interacts with PLAUR. In complex with SERPINE1, interacts with PLAUR/uPAR. Interacts with SORL1 and LRP1, either alone or in complex with SERPINE1; these interactions are abolished in the presence of LRPAP1/RAP. The ternary complex composed of PLAUR-PLAU-PAI1 also interacts with SORLA. Phosphorylation of Ser-158 and Ser-323 abolishes proadhesive ability but does not interfere with receptor binding. Post-translationally, produced as an inactive single-chain protein (pro-uPA or sc-uPA), is processed into the active disulfide-linked two-chain form of PLAU/uPA by a proteolytic event mediated, at least, by TMPRSS4. In terms of tissue distribution, expressed in the prostate gland and prostate cancers.

It localises to the secreted. The enzyme catalyses Specific cleavage of Arg-|-Val bond in plasminogen to form plasmin.. With respect to regulation, inhibited by SERPINA5. Inhibited by SERPINE1. Functionally, specifically cleaves the zymogen plasminogen to form the active enzyme plasmin. This Homo sapiens (Human) protein is Urokinase-type plasminogen activator.